A 57-amino-acid chain; its full sequence is uncharacterized protein (57 aa).

A helical membrane pass occupies residues 34 to 54; that stretch reads AALLDAAALVVIPGLLTAAAV.

Its subcellular location is the membrane. This is an uncharacterized protein from Dictyostelium discoideum (Social amoeba).